Consider the following 187-residue polypeptide: Cell division protein SepF (187 aa).

A disordered region spans residues 21–97 (EVEVPDKQQQ…ATPNNASQES (77 aa)). 2 stretches are compositionally biased toward polar residues: residues 38 to 63 (EQSQ…YTTT) and 70 to 97 (RMSN…SQES).

The protein belongs to the SepF family. As to quaternary structure, homodimer. Interacts with FtsZ.

The protein resides in the cytoplasm. Functionally, cell division protein that is part of the divisome complex and is recruited early to the Z-ring. Probably stimulates Z-ring formation, perhaps through the cross-linking of FtsZ protofilaments. Its function overlaps with FtsA. This chain is Cell division protein SepF, found in Staphylococcus aureus (strain MRSA252).